We begin with the raw amino-acid sequence, 787 residues long: ER degradation-enhancing alpha-mannosidase-like protein 1 (787 aa).

The signal sequence occupies residues 1 to 22 (MGSLHSIFCVCLILLCIFKENS). 5 N-linked (GlcNAc...) asparagine glycosylation sites follow: Asn479, Asn609, Asn670, Asn693, and Asn756.

Belongs to the glycosyl hydrolase 47 family.

It localises to the endoplasmic reticulum lumen. Alpha-mannosidase-like protein involved in endoplasmic reticulum-associated degradation (ERAD). Delivers misfolded glycoproteins to proteasomes. It lacks mannosidase activity. In Schizosaccharomyces pombe (strain 972 / ATCC 24843) (Fission yeast), this protein is ER degradation-enhancing alpha-mannosidase-like protein 1 (mnl1).